A 383-amino-acid chain; its full sequence is Aurachin C monooxygenase/isomerase (383 aa).

FAD-binding positions include Gly15, Ser47, Val128, Asp285, and 295-299 (GQGGC).

It depends on FAD as a cofactor.

It catalyses the reaction aurachin C + NADH + O2 + H(+) = 4-hydroxy-2-methyl-3-oxo-4-[(2E,6E)-farnesyl]-3,4-dihydroquinoline 1-oxide + NAD(+) + H2O. The enzyme catalyses aurachin C + NADPH + O2 + H(+) = 4-hydroxy-2-methyl-3-oxo-4-[(2E,6E)-farnesyl]-3,4-dihydroquinoline 1-oxide + NADP(+) + H2O. The catalysed reaction is aurachin C + NADH + O2 + H(+) = aurachin C epoxide + NAD(+) + H2O. It carries out the reaction aurachin C + NADPH + O2 + H(+) = aurachin C epoxide + NADP(+) + H2O. It catalyses the reaction aurachin C epoxide = 2-hydroxy-1a-methyl-7a-[(2E,6E)-farnesyl]-1a,2-dihydrooxireno[2,3-b]quinolin-7(7aH)-one. The enzyme catalyses 2-hydroxy-1a-methyl-7a-[(2E,6E)-farnesyl]-1a,2-dihydrooxireno[2,3-b]quinolin-7(7aH)-one = 4-hydroxy-2-methyl-3-oxo-4-[(2E,6E)-farnesyl]-3,4-dihydroquinoline 1-oxide. Catalyzes the initial step in the conversion of aurachin C to aurachin B. Catalyzes the epoxidation of the C(2)-C(3) double bond of aurachin C, which is followed by a semipinacol rearrangement, causing migration of the farnesyl group from C(3) to C(4). Accepts both NADH and NADPH, but has a preference for NADH. This Stigmatella aurantiaca protein is Aurachin C monooxygenase/isomerase.